A 1837-amino-acid polypeptide reads, in one-letter code: Nucleoporin nup211 (1837 aa).

3 coiled-coil regions span residues 59 to 378, 415 to 519, and 559 to 625; these read EVNY…YDEI, YKQK…ELDL, and VFRN…QLRY. The residue at position 650 (Thr650) is a Phosphothreonine. Coiled coils occupy residues 661 to 1163, 1222 to 1637, and 1675 to 1712; these read EQTS…NKLL, LDNR…ENTH, and KAKI…PEKT. The interval 1464 to 1521 is disordered; it reads KDSNHQLQESASSDAEQITKEQFEQLKSEKERTEKELADSKNELEHLQSEAVDADGKT. Residues 1468–1479 are compositionally biased toward polar residues; that stretch reads HQLQESASSDAE. Basic and acidic residues predominate over residues 1480–1521; sequence QITKEQFEQLKSEKERTEKELADSKNELEHLQSEAVDADGKT. Ser1558 is subject to Phosphoserine. Thr1560 bears the Phosphothreonine mark. Residue Ser1563 is modified to Phosphoserine. Disordered stretches follow at residues 1602-1642 and 1700-1837; these read EKEK…NIDD and ENLN…KKAK. Basic and acidic residues predominate over residues 1617–1628; it reads KSQRIKELEEQA. Polar residues-rich tracts occupy residues 1700-1730, 1753-1763, 1795-1814, and 1827-1837; these read ENLN…SKPT, KSLSARLQGTG, IATS…TAKS, and GGSSSNQKKAK.

The protein resides in the cytoplasm. The protein localises to the nucleus. Functions as a component of the nuclear pore complex (NPC). NPC components, collectively referred to as nucleoporins (NUPs), can play the role of both NPC structural components and of docking or interaction partners for transiently associated nuclear transport factors. Active directional transport is assured by both, a Phe-Gly (FG) repeat affinity gradient for these transport factors across the NPC and a transport cofactor concentration gradient across the nuclear envelope. The polypeptide is Nucleoporin nup211 (nup211) (Schizosaccharomyces pombe (strain 972 / ATCC 24843) (Fission yeast)).